A 568-amino-acid chain; its full sequence is NADPH oxidase 3 (568 aa).

Topologically, residues 1 to 13 (MMGCWILNEGLST) are cytoplasmic. A helical transmembrane segment spans residues 14–34 (ILVLSWLGINFYLFIDTFYWY). At 35–51 (EEEESFHYTRVILGSTL) the chain is on the extracellular side. Residues 52–72 (AWARASALCLNFNCMLILIPV) traverse the membrane as a helical segment. Positions 55 to 284 (RASALCLNFN…VVLYACERII (230 aa)) constitute a Ferric oxidoreductase domain. Topologically, residues 73 to 103 (SRNLISFIRGTSICCRGPWRRQLDKNLRFHK) are cytoplasmic. The helical transmembrane segment at 104–124 (LVAYGIAVNATIHIVAHFFNL) threads the bilayer. Topologically, residues 125 to 167 (ERYHWSQSEEAQGLLAALSKLGNTPNESYLNPVRTFPTNTTTE) are extracellular. N163 carries an N-linked (GlcNAc...) asparagine glycan. Residues 168–188 (LLRTIAGVTGLVISLALVLIM) form a helical membrane-spanning segment. At 189 to 201 (TSSTEFIRQASYE) the chain is on the cytoplasmic side. The helical transmembrane segment at 202-222 (LFWYTHHVFIVFFLSLAIHGT) threads the bilayer. Over 223–395 (GRIVRGQTQD…DGPFGTALTD (173 aa)) the chain is Extracellular. N-linked (GlcNAc...) asparagine glycosylation occurs at N238. The region spanning 285 to 395 (RFWRFQQEVV…DGPFGTALTD (111 aa)) is the FAD-binding FR-type domain. A helical transmembrane segment spans residues 396-416 (VFHYPVCVCVAAGIGVTPFAA). At 417–568 (LLKSIWYKCS…VHFYYNKESF (152 aa)) the chain is on the cytoplasmic side.

Interacts with CYBA/p22phox. Heterodimerization with CYBA/p22phox is essential for its activity and cell membrane localization. Requires heme as cofactor. N-glycosylated in a CYBA/p22phox-dependent manner.

The protein resides in the cell membrane. It catalyses the reaction NADPH + 2 O2 = 2 superoxide + NADP(+) + H(+). Its activity is regulated as follows. Activated by the ototoxic drug cisplatin. Activated by NOXO1. Cooperatively activated by NCF1 and NCF2 or NOXA1 in a phorbol 12-myristate 13-acetate (PMA)-dependent manner. Inhibited by diphenyleneiodonium chloride. In terms of biological role, NADPH oxidase that catalyzes the generation of superoxide from molecular oxygen utilizing NADPH as an electron donor, upon formation of a complex with CYBA/p22phox. Plays a role in the biogenesis of otoconia/otolith, which are crystalline structures of the inner ear involved in the perception of gravity. This chain is NADPH oxidase 3 (NOX3), found in Homo sapiens (Human).